The sequence spans 490 residues: GTPase Der (490 aa).

EngA-type G domains lie at 3–166 (PVVA…MEDL) and 203–376 (IKLA…DSST). Residues 9 to 16 (GRPNVGKS), 56 to 60 (DTGGI), 118 to 121 (NKTD), 209 to 216 (GRPNVGKS), 256 to 260 (DTAGV), and 321 to 324 (NKWD) contribute to the GTP site. The KH-like domain maps to 377 to 461 (RRVGTSMLTR…PIRIQFKEGE (85 aa)).

The protein belongs to the TRAFAC class TrmE-Era-EngA-EngB-Septin-like GTPase superfamily. EngA (Der) GTPase family. In terms of assembly, associates with the 50S ribosomal subunit.

GTPase that plays an essential role in the late steps of ribosome biogenesis. This is GTPase Der from Escherichia coli O127:H6 (strain E2348/69 / EPEC).